The chain runs to 475 residues: Transmembrane protein 181 (475 aa).

9 helical membrane-spanning segments follow: residues 16–36 (HFVL…FVGI), 131–151 (EIIV…IVGF), 175–195 (LEIW…CLFA), 214–234 (SVLL…SFLV), 245–265 (LFQS…YHGI), 276–296 (FYLP…TLGI), 320–340 (MKVF…FLIV), 356–376 (LKFL…ILYL), and 401–421 (FLSF…VYSP). Serine 443 carries the phosphoserine modification.

It belongs to the TMEM181 family. As to quaternary structure, interacts with cytolethal distending toxin.

The protein localises to the membrane. In terms of biological role, mediates action of cytolethal distending toxins (CDT), which are secreted by many pathogenic bacteria. Expression level of TMEM181 is rate-limiting for intoxication. The sequence is that of Transmembrane protein 181 (TMEM181) from Homo sapiens (Human).